We begin with the raw amino-acid sequence, 223 residues long: MRLIAALLSVLLIASTAQSTVTIYESSKPGDFDFYLFVQQWIYSYCDSQTCIQNKEREAFTIHGLWPENSDGSYPSFCSGPSFNVNAIQDLEDQLNFDWPSLTGPNTDFWTHEFSKHGTCSITGPITDIHDYFATGIKLYTEFNITAALESENIYPSDSNTYKPVDITNAITTHFGGKPGIQCSSGQLSTVAVCIDKNSLSIMDCPDLQGWSCSGSVKFPSTA.

Positions 1 to 25 (MRLIAALLSVLLIASTAQSTVTIYE) are cleaved as a signal peptide. A disulfide bridge links Cys46 with Cys51. Active-site residues include His63, Glu113, and His117. A disulfide bond links Cys78 and Cys120. Residue Asn144 is glycosylated (N-linked (GlcNAc...) asparagine). Cystine bridges form between Cys183-Cys213 and Cys194-Cys205.

The protein belongs to the RNase T2 family.

Its subcellular location is the lysosome. It catalyses the reaction a ribonucleotidyl-ribonucleotide-RNA + H2O = a 3'-end 3'-phospho-ribonucleotide-RNA + a 5'-end dephospho-ribonucleoside-RNA + H(+). With respect to regulation, inhibited by Cu(2+) and Zn(2+). Releases mononucleotides from RNA in the order of 3'-GMP &gt; 3'-UMP &gt; 3'-AMP &gt; 3'-CMP. The sequence is that of Ribonuclease DdI (ddiA) from Dictyostelium discoideum (Social amoeba).